The chain runs to 263 residues: UPF0739 protein C1orf74 homolog (263 aa).

Belongs to the UPF0739 family.

This Xenopus tropicalis (Western clawed frog) protein is UPF0739 protein C1orf74 homolog.